The sequence spans 352 residues: Quinolinate synthase (352 aa).

Iminosuccinate is bound by residues H48 and S69. C114 is a [4Fe-4S] cluster binding site. Iminosuccinate is bound by residues 140 to 142 (YAN) and S157. C201 is a [4Fe-4S] cluster binding site. Residues 227-229 (HPE) and T244 each bind iminosuccinate. C298 lines the [4Fe-4S] cluster pocket.

Belongs to the quinolinate synthase family. Type 1 subfamily. Requires [4Fe-4S] cluster as cofactor.

The protein localises to the cytoplasm. It carries out the reaction iminosuccinate + dihydroxyacetone phosphate = quinolinate + phosphate + 2 H2O + H(+). It functions in the pathway cofactor biosynthesis; NAD(+) biosynthesis; quinolinate from iminoaspartate: step 1/1. In terms of biological role, catalyzes the condensation of iminoaspartate with dihydroxyacetone phosphate to form quinolinate. In Pseudomonas syringae pv. tomato (strain ATCC BAA-871 / DC3000), this protein is Quinolinate synthase.